A 465-amino-acid polypeptide reads, in one-letter code: Box C/D snoRNA protein 1 (465 aa).

Positions 1–72 are disordered; it reads MEFAAENEGK…GSRQRPEEIP (72 aa). Serine 25 bears the Phosphoserine mark. The span at 56 to 70 shows a compositional bias: basic and acidic residues; the sequence is EIGDGEEGSRQRPEE. Residues lysine 79, lysine 108, lysine 118, lysine 138, lysine 148, lysine 157, lysine 168, lysine 178, and lysine 195 each participate in a glycyl lysine isopeptide (Lys-Gly) (interchain with G-Cter in SUMO2) cross-link. The Zn(2+) site is built by cysteine 215, cysteine 218, cysteine 227, cysteine 230, cysteine 235, cysteine 239, histidine 243, and cysteine 249. Residues 215-249 form an HIT-type zinc finger; that stretch reads CETCGTEEAKYRCPRCMRYSCSLPCVKKHKAELTC. A Glycyl lysine isopeptide (Lys-Gly) (interchain with G-Cter in SUMO2) cross-link involves residue lysine 454.

This sequence belongs to the BCD1 family. Interacts with FBL, SNU13, NOP58, NUFIP1, RUVBL1, RUVBL2 and TAF9. Interacts (via HIT-type zinc finger) with the RUVBL1/RUVBL2 complex in the presence of ADP.

Required for box C/D snoRNAs accumulation involved in snoRNA processing, snoRNA transport to the nucleolus and ribosome biogenesis. The chain is Box C/D snoRNA protein 1 (ZNHIT6) from Pongo abelii (Sumatran orangutan).